A 473-amino-acid chain; its full sequence is Photosystem II CP43 reaction center protein (473 aa).

The propeptide occupies 1-14 (MKTLYSLRRFYHVE). Residue Thr15 is modified to N-acetylthreonine. Thr15 carries the phosphothreonine modification. 5 helical membrane-spanning segments follow: residues 69-93 (LFEVAHFVPEKPMYEQGLILLPHLA), 134-155 (LIGPETLEESFPFFGYVWKDKN), 178-200 (KAVWFGGVYDTWAPGGGDVRKIT), 255-275 (KPFAWARRAFIWSGEAYLSYS), and 291-312 (WFNNTAYPSEFYGPTGPEASQA). Glu367 is a binding site for [CaMn4O5] cluster. Residues 447-471 (RARAAAAGFEKGIDRETEPVFFMNP) form a helical membrane-spanning segment.

Belongs to the PsbB/PsbC family. PsbC subfamily. PSII is composed of 1 copy each of membrane proteins PsbA, PsbB, PsbC, PsbD, PsbE, PsbF, PsbH, PsbI, PsbJ, PsbK, PsbL, PsbM, PsbT, PsbX, PsbY, PsbZ, Psb30/Ycf12, at least 3 peripheral proteins of the oxygen-evolving complex and a large number of cofactors. It forms dimeric complexes. It depends on Binds multiple chlorophylls and provides some of the ligands for the Ca-4Mn-5O cluster of the oxygen-evolving complex. It may also provide a ligand for a Cl- that is required for oxygen evolution. PSII binds additional chlorophylls, carotenoids and specific lipids. as a cofactor.

Its subcellular location is the plastid. The protein resides in the chloroplast thylakoid membrane. In terms of biological role, one of the components of the core complex of photosystem II (PSII). It binds chlorophyll and helps catalyze the primary light-induced photochemical processes of PSII. PSII is a light-driven water:plastoquinone oxidoreductase, using light energy to abstract electrons from H(2)O, generating O(2) and a proton gradient subsequently used for ATP formation. This Staurastrum punctulatum (Green alga) protein is Photosystem II CP43 reaction center protein.